The primary structure comprises 142 residues: Glia maturation factor gamma (142 aa).

Ser-2 bears the N-acetylserine mark. Residues 4–139 (SLVVCDVDPE…NETWLKEKLA (136 aa)) enclose the ADF-H domain.

This sequence belongs to the actin-binding proteins ADF family. GMF subfamily. Expressed in rat thymus, testis, and spleen. Is present predominantly in proliferative and differentiative organs.

The polypeptide is Glia maturation factor gamma (Gmfg) (Rattus norvegicus (Rat)).